Here is a 126-residue protein sequence, read N- to C-terminus: Large ribosomal subunit protein bL12 (126 aa).

The protein belongs to the bacterial ribosomal protein bL12 family. As to quaternary structure, homodimer. Part of the ribosomal stalk of the 50S ribosomal subunit. Forms a multimeric L10(L12)X complex, where L10 forms an elongated spine to which 2 to 4 L12 dimers bind in a sequential fashion. Binds GTP-bound translation factors.

Functionally, forms part of the ribosomal stalk which helps the ribosome interact with GTP-bound translation factors. Is thus essential for accurate translation. This chain is Large ribosomal subunit protein bL12, found in Solibacter usitatus (strain Ellin6076).